A 665-amino-acid polypeptide reads, in one-letter code: Protein Fe65 homolog (665 aa).

Basic and acidic residues predominate over residues 1–12 (MREGTPRVRIEV). Disordered stretches follow at residues 1–43 (MREG…DTAT) and 90–111 (SRGY…RRRN). The span at 14 to 24 (KGSNRPSQFVS) shows a compositional bias: polar residues. 2 stretches are compositionally biased toward basic and acidic residues: residues 27–40 (EEQR…RDSD) and 102–111 (GRREEERRRN). The WW domain occupies 233–266 (KDLPPGWEKHEDPQGYSYYWHVDSGTIQRQPPPP). 2 consecutive PID domains span residues 330–456 (VRFA…RDIC) and 499–615 (FLGV…VLDA).

Interacts (via PID 2 domain) with apl-1 (via cytoplasmic domain). Post-translationally, phosphorylated. As to expression, expressed in the pharynx (including pharyngeal muscle and nerve cells), ventral nerve cord and tail neurons.

The protein localises to the cytoplasm. The protein resides in the cytoskeleton. Modulates pharyngeal pumping activity, at least in part by regulating expression of the acetylcholinesterase genes ace-1 and ace-2. The protein is Protein Fe65 homolog of Caenorhabditis elegans.